Here is a 71-residue protein sequence, read N- to C-terminus: DNA-directed RNA polymerase subunit omega (71 aa).

It belongs to the RNA polymerase subunit omega family. The RNAP catalytic core consists of 2 alpha, 1 beta, 1 beta' and 1 omega subunit. When a sigma factor is associated with the core the holoenzyme is formed, which can initiate transcription.

It carries out the reaction RNA(n) + a ribonucleoside 5'-triphosphate = RNA(n+1) + diphosphate. Its function is as follows. Promotes RNA polymerase assembly. Latches the N- and C-terminal regions of the beta' subunit thereby facilitating its interaction with the beta and alpha subunits. The sequence is that of DNA-directed RNA polymerase subunit omega from Campylobacter concisus (strain 13826).